A 611-amino-acid polypeptide reads, in one-letter code: MSPTDTTPLLYSWDDQSRHQDPDWHKLRNYHGAWYRRISRRRFSQFIFAFGLMTLFVLVYSISSNLHTPTQFTGHKVRGRRGAVASEVPVCSDIGVSMLADGGNAVDAAIASTFCIGVVNFFSSGIGGGGFMLIKHPNETAQSLTFREIAPGNVSKHMFDKNPMLAQVGPLSIAIPGELAGLYEAWKSHGLLDWSKLLEPNVKLAREGFPVTRAMERVLKLPEMAHLLKDPIWQPILMPNGKVLRAGDKMFRPAYAKTLEIIANKGIEPFYRGELTNSMVKFIQDNGGIVTVEDFGNYSTVFADALHTSYRGHDVYTCTLPTSGPALIEGLNILDGYPLNTPSLAFPKRLHLEVEAMKWLSAGRTQFGDPDFLPLDHLDVVSKLLSKEFASQIRNNISLSKTYPWEHYNPSYDLPISHGTTHVSTVDSNNLAVSITSTVNLLFGSQLMDPVTGVVFNDQMDDFSIPGASNAFNLSPSPWNFIEPFKRPQSSSAPTILTDINGDFEMALGASGGSRIVTAVLDSIIKRIDMDYDIESMVASARPHHQLLPDILILESGFSKSVATRMKKYGHKVWRLKQHDTPLSQIQAVTRHHSEYYGMSDPRKYGQAAAY.

At 1–42 (MSPTDTTPLLYSWDDQSRHQDPDWHKLRNYHGAWYRRISRRR) the chain is on the cytoplasmic side. A helical; Signal-anchor for type II membrane protein membrane pass occupies residues 43–63 (FSQFIFAFGLMTLFVLVYSIS). Residues 64 to 611 (SNLHTPTQFT…PRKYGQAAAY (548 aa)) lie on the Lumenal side of the membrane. The N-linked (GlcNAc...) asparagine glycan is linked to Asn138. Arg147 serves as a coordination point for L-glutamate. N-linked (GlcNAc...) asparagine glycans are attached at residues Asn153, Asn297, and Asn396. The active-site Nucleophile is the Thr420. Residues Thr438, Asn440, Gln459, Asp462, 490-491 (SS), and 512-513 (GG) contribute to the L-glutamate site.

It belongs to the gamma-glutamyltransferase family. In terms of assembly, heterodimer composed of the light and heavy chains. The active site is located in the light chain. In terms of processing, cleaved by autocatalysis into a large and a small subunit.

It localises to the vacuole membrane. It catalyses the reaction an N-terminal (5-L-glutamyl)-[peptide] + an alpha-amino acid = 5-L-glutamyl amino acid + an N-terminal L-alpha-aminoacyl-[peptide]. It carries out the reaction glutathione + H2O = L-cysteinylglycine + L-glutamate. The catalysed reaction is an S-substituted glutathione + H2O = an S-substituted L-cysteinylglycine + L-glutamate. It participates in sulfur metabolism; glutathione metabolism. Its function is as follows. Catalyzes the transfer of the gamma-glutamyl moiety of glutathione (GSH) and other gamma-glutamyl compounds to amino acids and peptides. Major GSH-degrading enzyme, catalyzing the hydrolytic release of L-glutamate from GSH. Plays a role in the turnover of the vacuolar GSH, serving as an alternative nitrogen source during nitrogen starvation. The protein is Glutathione hydrolase proenzyme 2 (ggt2) of Schizosaccharomyces pombe (strain 972 / ATCC 24843) (Fission yeast).